Consider the following 187-residue polypeptide: Elongation factor P (187 aa).

This sequence belongs to the elongation factor P family.

It localises to the cytoplasm. It participates in protein biosynthesis; polypeptide chain elongation. Its function is as follows. Involved in peptide bond synthesis. Stimulates efficient translation and peptide-bond synthesis on native or reconstituted 70S ribosomes in vitro. Probably functions indirectly by altering the affinity of the ribosome for aminoacyl-tRNA, thus increasing their reactivity as acceptors for peptidyl transferase. In Mycobacteroides abscessus (strain ATCC 19977 / DSM 44196 / CCUG 20993 / CIP 104536 / JCM 13569 / NCTC 13031 / TMC 1543 / L948) (Mycobacterium abscessus), this protein is Elongation factor P.